A 405-amino-acid chain; its full sequence is Replication factor C large subunit (405 aa).

Residue 47–54 (GPPGVGKT) participates in ATP binding.

Belongs to the activator 1 small subunits family. RfcL subfamily. In terms of assembly, heteromultimer composed of small subunits (RfcS) and large subunits (RfcL).

Part of the RFC clamp loader complex which loads the PCNA sliding clamp onto DNA. In Saccharolobus islandicus (strain M.16.4 / Kamchatka #3) (Sulfolobus islandicus), this protein is Replication factor C large subunit.